Consider the following 938-residue polypeptide: Isoleucine--tRNA ligase (938 aa).

The short motif at 65 to 75 (PYANGSIHIGH) is the 'HIGH' region element. Glu-568 contacts L-isoleucyl-5'-AMP. Positions 609–613 (KMSKS) match the 'KMSKS' region motif. Residue Lys-612 coordinates ATP. Cys-905, Cys-908, Cys-921, and Cys-924 together coordinate Zn(2+).

It belongs to the class-I aminoacyl-tRNA synthetase family. IleS type 1 subfamily. In terms of assembly, monomer. Zn(2+) serves as cofactor.

The protein resides in the cytoplasm. The catalysed reaction is tRNA(Ile) + L-isoleucine + ATP = L-isoleucyl-tRNA(Ile) + AMP + diphosphate. In terms of biological role, catalyzes the attachment of isoleucine to tRNA(Ile). As IleRS can inadvertently accommodate and process structurally similar amino acids such as valine, to avoid such errors it has two additional distinct tRNA(Ile)-dependent editing activities. One activity is designated as 'pretransfer' editing and involves the hydrolysis of activated Val-AMP. The other activity is designated 'posttransfer' editing and involves deacylation of mischarged Val-tRNA(Ile). This Mannheimia succiniciproducens (strain KCTC 0769BP / MBEL55E) protein is Isoleucine--tRNA ligase.